The chain runs to 255 residues: 3-dehydroquinate dehydratase (255 aa).

Residues 46 to 48 (EWR) and Arg-82 each bind 3-dehydroquinate. The active-site Proton donor/acceptor is the His-143. Lys-170 acts as the Schiff-base intermediate with substrate in catalysis. The 3-dehydroquinate site is built by Arg-213, Ser-232, and Gln-236.

This sequence belongs to the type-I 3-dehydroquinase family. As to quaternary structure, homodimer.

It catalyses the reaction 3-dehydroquinate = 3-dehydroshikimate + H2O. The protein operates within metabolic intermediate biosynthesis; chorismate biosynthesis; chorismate from D-erythrose 4-phosphate and phosphoenolpyruvate: step 3/7. Its function is as follows. Involved in the third step of the chorismate pathway, which leads to the biosynthesis of aromatic amino acids. Catalyzes the cis-dehydration of 3-dehydroquinate (DHQ) and introduces the first double bond of the aromatic ring to yield 3-dehydroshikimate. The polypeptide is 3-dehydroquinate dehydratase (Bacillus subtilis (strain 168)).